A 1151-amino-acid chain; its full sequence is PPi-type phosphoenolpyruvate carboxykinase 1 (1151 aa).

The stretch at 1083-1129 forms a coiled coil; the sequence is RQKLEVAKLNKDLAYLNKTIAEKPRLAETLNKQIAAVKEELQYVSSE.

It belongs to the PPi-type phosphoenolpyruvate carboxykinase family. In terms of assembly, monomer and trimer; forms heterotrimers with PEPCK2 and PEPCK3.

The protein localises to the cytoplasm. The protein resides in the cytosol. It carries out the reaction oxaloacetate + diphosphate = phosphoenolpyruvate + phosphate + CO2. In terms of biological role, inorganic pyrophosphate (PPi)-dependent phosphoenolpyruvate carboxykinase, which regulates the carbon flow of the central metabolism by fixing CO(2) to phosphoenolpyruvate to produce oxaloacetate. Can also produce pyruvate and diphosphate from phosphoenolpyruvate and phosphate. This Entamoeba histolytica (strain ATCC 30459 / HM-1:IMSS / ABRM) protein is PPi-type phosphoenolpyruvate carboxykinase 1.